Reading from the N-terminus, the 379-residue chain is Early boundary activity protein 3 (379 aa).

As to quaternary structure, the heterotrimeric Elba complex consists of Elba1, Elba2 and Elba3.

The protein localises to the nucleus. Functionally, the heterotrimeric Elba complex is required for chromatin domain boundary function during early embryogenesis. It binds to a 8-bp sequence 5'-CCAATAAG-3' in the Fab-7 insulator or boundary element in the bithorax complex and contributes to its insulator or boundary activity. Elba3 lacks DNA-binding activity and plays the role of an adapter protein, bringing Elba1 and 2 together, thereby establishing a complex that recognizes the asymmetric sequence motif through the BEN domains of Elba1 and 2. This Drosophila melanogaster (Fruit fly) protein is Early boundary activity protein 3.